Consider the following 161-residue polypeptide: Large ribosomal subunit protein uL30m (161 aa).

Residues 1-34 (MAGILRSIVQRPPGRLQTATKGVEPLVCVDWIRH) constitute a mitochondrion transit peptide.

It belongs to the universal ribosomal protein uL30 family. Component of the mitochondrial ribosome large subunit (39S) which comprises a 16S rRNA and about 50 distinct proteins.

It localises to the mitochondrion. In Bos taurus (Bovine), this protein is Large ribosomal subunit protein uL30m (MRPL30).